The primary structure comprises 243 residues: Ribosomal RNA small subunit methyltransferase G (243 aa).

S-adenosyl-L-methionine contacts are provided by residues glycine 80, phenylalanine 85, 132 to 133 (IE), and arginine 151.

Belongs to the methyltransferase superfamily. RNA methyltransferase RsmG family.

The protein resides in the cytoplasm. Functionally, specifically methylates the N7 position of a guanine in 16S rRNA. The protein is Ribosomal RNA small subunit methyltransferase G of Synechococcus sp. (strain CC9902).